Here is a 918-residue protein sequence, read N- to C-terminus: E3 ubiquitin-protein ligase CBL-B-A (918 aa).

The segment covering methionine 1–glycine 18 has biased composition (low complexity). The tract at residues methionine 1 to asparagine 27 is disordered. Residues proline 46–glutamine 178 are 4H. The region spanning proline 46–glycine 354 is the Cbl-PTB domain. Residues glycine 179 to phenylalanine 251 are EF-hand-like. Ca(2+) contacts are provided by aspartate 232, threonine 234, asparagine 236, tyrosine 238, and glutamate 243. The tract at residues glutamine 252–glycine 354 is SH2-like. Arginine 297 provides a ligand contact to 4-O-phospho-L-tyrosine. A linker region spans residues leucine 355–leucine 383. The segment at cysteine 384 to arginine 423 adopts an RING-type zinc-finger fold. Disordered stretches follow at residues asparagine 481–arginine 582, phenylalanine 780–arginine 831, and histidine 857–threonine 918. Residues arginine 483–serine 497 are compositionally biased toward polar residues. 2 stretches are compositionally biased toward pro residues: residues leucine 554–proline 576 and proline 821–alanine 830. Over residues lysine 898–threonine 918 the composition is skewed to polar residues.

As to quaternary structure, interacts with several SH3 domain-containing proteins and with poly-ubiquitinated proteins.

It is found in the cytoplasm. It carries out the reaction S-ubiquitinyl-[E2 ubiquitin-conjugating enzyme]-L-cysteine + [acceptor protein]-L-lysine = [E2 ubiquitin-conjugating enzyme]-L-cysteine + N(6)-ubiquitinyl-[acceptor protein]-L-lysine.. It functions in the pathway protein modification; protein ubiquitination. E3 ubiquitin-protein ligase which accepts ubiquitin from specific E2 ubiquitin-conjugating enzymes, and transfers it to substrates, generally promoting their degradation by the proteasome. The sequence is that of E3 ubiquitin-protein ligase CBL-B-A (cblb-a) from Xenopus laevis (African clawed frog).